The sequence spans 343 residues: MTGLSTLTEASDSRKMVDPYGRTISYLRVSVTDRCDLRCFYCMSEDMTFLPKADLLTLEELDRLCSAFIAKGVRKLRLTGGEPLVRRNVMSLIRSLSRHLGTGALNELTLTTNGSQLARFAAELKDCGVRRINVSLDTLDPAKFREITRWGDIQKVMAGIDAAQAAGLAVKINAVALKNLNDHEIPSLMEWAHGRDMALTLIEVMPMGDIGQSRADQYLPLSMLRARLAGQYTLTDVDDSTGGPARYVKVNETGGKLGFITPMTHNFCESCNRVRITCTGTLHTCLGHEDASDLRRPLRASAGDELLYETIDRAIGLKPKGHDFIIDRHNRPSVSRHMSVTGG.

Residues 19–244 (PYGRTISYLR…TDVDDSTGGP (226 aa)) enclose the Radical SAM core domain. Arg-28 serves as a coordination point for GTP. 2 residues coordinate [4Fe-4S] cluster: Cys-35 and Cys-39. An S-adenosyl-L-methionine-binding site is contributed by Tyr-41. A [4Fe-4S] cluster-binding site is contributed by Cys-42. Arg-77 provides a ligand contact to GTP. Gly-81 serves as a coordination point for S-adenosyl-L-methionine. Thr-111 contacts GTP. S-adenosyl-L-methionine is bound at residue Ser-135. Lys-171 contacts GTP. S-adenosyl-L-methionine is bound at residue Met-205. [4Fe-4S] cluster contacts are provided by Cys-268 and Cys-271. GTP is bound at residue 273–275 (RVR). Cys-285 contacts [4Fe-4S] cluster.

It belongs to the radical SAM superfamily. MoaA family. As to quaternary structure, monomer and homodimer. [4Fe-4S] cluster is required as a cofactor.

The catalysed reaction is GTP + AH2 + S-adenosyl-L-methionine = (8S)-3',8-cyclo-7,8-dihydroguanosine 5'-triphosphate + 5'-deoxyadenosine + L-methionine + A + H(+). It participates in cofactor biosynthesis; molybdopterin biosynthesis. Its function is as follows. Catalyzes the cyclization of GTP to (8S)-3',8-cyclo-7,8-dihydroguanosine 5'-triphosphate. This Nitrobacter hamburgensis (strain DSM 10229 / NCIMB 13809 / X14) protein is GTP 3',8-cyclase.